Here is a 165-residue protein sequence, read N- to C-terminus: NADPH-dependent 7-cyano-7-deazaguanine reductase (165 aa).

Cysteine 56 serves as the catalytic Thioimide intermediate. The Proton donor role is filled by aspartate 63. Residues 78–80 (VES) and 97–98 (HE) each bind substrate.

Belongs to the GTP cyclohydrolase I family. QueF type 1 subfamily.

It is found in the cytoplasm. The catalysed reaction is 7-aminomethyl-7-carbaguanine + 2 NADP(+) = 7-cyano-7-deazaguanine + 2 NADPH + 3 H(+). It functions in the pathway tRNA modification; tRNA-queuosine biosynthesis. Catalyzes the NADPH-dependent reduction of 7-cyano-7-deazaguanine (preQ0) to 7-aminomethyl-7-deazaguanine (preQ1). The protein is NADPH-dependent 7-cyano-7-deazaguanine reductase of Bacillus cereus (strain ATCC 14579 / DSM 31 / CCUG 7414 / JCM 2152 / NBRC 15305 / NCIMB 9373 / NCTC 2599 / NRRL B-3711).